Here is an 854-residue protein sequence, read N- to C-terminus: DNA mismatch repair protein MutS (854 aa).

614-621 is an ATP binding site; it reads GPNMGGKS.

It belongs to the DNA mismatch repair MutS family.

Functionally, this protein is involved in the repair of mismatches in DNA. It is possible that it carries out the mismatch recognition step. This protein has a weak ATPase activity. The sequence is that of DNA mismatch repair protein MutS from Sodalis glossinidius (strain morsitans).